Reading from the N-terminus, the 129-residue chain is MKKVITYGTFDLFHYGHMKLLERAKNLGDYLIVGLSTDEFNLQKQKKSHHSYEHRKFILETIDLVNEVIPEKNWEQKISDIQKHDIDTFVIGDDWKGKFDFLKEYCEVIYLPRTDGISTTQIKKDMASL.

CTP is bound by residues 9–10 (TF) and 14–17 (HYGH). Lys-44 contributes to the substrate binding site. Lys-46 contributes to the CTP binding site. Lys-77 provides a ligand contact to substrate. 113 to 120 (RTDGISTT) lines the CTP pocket.

The protein belongs to the cytidylyltransferase family. Homodimer.

The protein resides in the cytoplasm. It carries out the reaction sn-glycerol 3-phosphate + CTP + H(+) = CDP-glycerol + diphosphate. It participates in cell wall biogenesis; poly(ribitol phosphate) teichoic acid biosynthesis. In terms of biological role, catalyzes the transfer of the cytidylyl group of CTP to sn-glycerol 3-phosphate so the activated glycerol 3-phosphate can be used for teichoic acid synthesis, via incorporation into both the linkage unit by TarB and TarF. The chain is Glycerol-3-phosphate cytidylyltransferase (tarD) from Bacillus spizizenii (strain ATCC 23059 / NRRL B-14472 / W23) (Bacillus subtilis subsp. spizizenii).